Consider the following 288-residue polypeptide: Thymidylate synthase (288 aa).

Residues R21 and 150–151 contribute to the dUMP site; that span reads RR. Residue C170 is the Nucleophile of the active site. Residues 191–194, N202, and 232–234 each bind dUMP; these read RSGD and HIY. Position 194 (D194) interacts with (6R)-5,10-methylene-5,6,7,8-tetrahydrofolate. A287 is a (6R)-5,10-methylene-5,6,7,8-tetrahydrofolate binding site.

This sequence belongs to the thymidylate synthase family. Bacterial-type ThyA subfamily. As to quaternary structure, homodimer.

Its subcellular location is the cytoplasm. The enzyme catalyses dUMP + (6R)-5,10-methylene-5,6,7,8-tetrahydrofolate = 7,8-dihydrofolate + dTMP. Its pathway is pyrimidine metabolism; dTTP biosynthesis. Catalyzes the reductive methylation of 2'-deoxyuridine-5'-monophosphate (dUMP) to 2'-deoxythymidine-5'-monophosphate (dTMP) while utilizing 5,10-methylenetetrahydrofolate (mTHF) as the methyl donor and reductant in the reaction, yielding dihydrofolate (DHF) as a by-product. This enzymatic reaction provides an intracellular de novo source of dTMP, an essential precursor for DNA biosynthesis. The chain is Thymidylate synthase from Mesoplasma florum (strain ATCC 33453 / NBRC 100688 / NCTC 11704 / L1) (Acholeplasma florum).